Here is a 353-residue protein sequence, read N- to C-terminus: UPF0421 protein YgaE (353 aa).

Transmembrane regions (helical) follow at residues Leu20 to Ile40, Val67 to Ile87, Leu103 to Ile123, and Thr125 to Pro145.

It belongs to the UPF0421 family.

The protein resides in the cell membrane. In Bacillus subtilis (strain 168), this protein is UPF0421 protein YgaE (ygaE).